We begin with the raw amino-acid sequence, 37 residues long: Large ribosomal subunit protein bL36c (37 aa).

Belongs to the bacterial ribosomal protein bL36 family.

It is found in the plastid. Its subcellular location is the chloroplast. This is Large ribosomal subunit protein bL36c (rpl36) from Euglena gracilis.